The primary structure comprises 569 residues: Glutamyl-tRNA reductase (569 aa).

Substrate is bound by residues 49–52 (TCNR), Ser109, 114–116 (EGQ), and Gln120. Cys50 acts as the Nucleophile in catalysis. 192–197 (GAGSMS) contacts NADP(+). The insert stretch occupies residues 284–397 (PVAVREETPA…VEAPRPAPAL (114 aa)). A disordered region spans residues 546-569 (AAVSRADDRDTSDSTENAKNRGRE). Residues 550–569 (RADDRDTSDSTENAKNRGRE) show a composition bias toward basic and acidic residues.

The protein belongs to the glutamyl-tRNA reductase family. In terms of assembly, homodimer.

The enzyme catalyses (S)-4-amino-5-oxopentanoate + tRNA(Glu) + NADP(+) = L-glutamyl-tRNA(Glu) + NADPH + H(+). Its pathway is porphyrin-containing compound metabolism; protoporphyrin-IX biosynthesis; 5-aminolevulinate from L-glutamyl-tRNA(Glu): step 1/2. Functionally, catalyzes the NADPH-dependent reduction of glutamyl-tRNA(Glu) to glutamate 1-semialdehyde (GSA). This is Glutamyl-tRNA reductase from Streptomyces avermitilis (strain ATCC 31267 / DSM 46492 / JCM 5070 / NBRC 14893 / NCIMB 12804 / NRRL 8165 / MA-4680).